The sequence spans 595 residues: Isoprene synthase, chloroplastic (595 aa).

Residues 1-37 (MATELLCLHRPISLTHKLFRNPLPKVIQATPLTLKLR) constitute a chloroplast transit peptide. Aspartate 345 provides a ligand contact to dimethylallyl diphosphate. Positions 345 and 349 each coordinate Mg(2+). The DDXXD motif motif lies at 345 to 349 (DDIYD). 3 residues coordinate dimethylallyl diphosphate: glutamate 423, arginine 486, and asparagine 489. Mg(2+)-binding residues include asparagine 489, serine 493, and glutamate 497.

It belongs to the terpene synthase family. Tpsb subfamily. As to quaternary structure, homodimer. Mg(2+) is required as a cofactor. Requires Mn(2+) as cofactor.

The protein resides in the plastid. Its subcellular location is the chloroplast. It carries out the reaction dimethylallyl diphosphate = isoprene + diphosphate. It participates in secondary metabolite biosynthesis; terpenoid biosynthesis. Competitive inhibition is mediated by geranyl diphosphate (GPP). Its function is as follows. Lyase that catalyzes the formation of isoprene from dimethylallyl diphosphate via a syn-periplanar elimination mechanism in which the diphosphate-leaving group serves as a general base. In Populus canescens (Grey poplar), this protein is Isoprene synthase, chloroplastic.